The sequence spans 444 residues: Phosphoglucosamine mutase (444 aa).

The Phosphoserine intermediate role is filled by S99. Residues S99, D242, D244, and D246 each coordinate Mg(2+). Position 99 is a phosphoserine (S99).

It belongs to the phosphohexose mutase family. Requires Mg(2+) as cofactor. Activated by phosphorylation.

The enzyme catalyses alpha-D-glucosamine 1-phosphate = D-glucosamine 6-phosphate. In terms of biological role, catalyzes the conversion of glucosamine-6-phosphate to glucosamine-1-phosphate. This is Phosphoglucosamine mutase from Aliarcobacter butzleri (strain RM4018) (Arcobacter butzleri).